A 260-amino-acid polypeptide reads, in one-letter code: NAD-capped RNA hydrolase NudC (260 aa).

The substrate site is built by lysine 25 and arginine 69. 2 residues coordinate Zn(2+): cysteine 98 and cysteine 101. Glutamate 111 lines the substrate pocket. 2 residues coordinate Zn(2+): cysteine 116 and cysteine 119. Residue tyrosine 124 participates in substrate binding. Positions 125–248 constitute a Nudix hydrolase domain; the sequence is PQIAPCVIVA…TVARRLIEDT (124 aa). Residues alanine 158, glutamate 174, and glutamate 178 each contribute to the a divalent metal cation site. The Nudix box motif lies at 159–180; sequence GFVEVGETLEQAVSREVLEESN. 192 to 199 lines the substrate pocket; the sequence is QPWPFPHS. Glutamate 219 is an a divalent metal cation binding site. Alanine 241 provides a ligand contact to substrate.

This sequence belongs to the Nudix hydrolase family. NudC subfamily. In terms of assembly, homodimer. It depends on Mg(2+) as a cofactor. Mn(2+) is required as a cofactor. The cofactor is Zn(2+).

It catalyses the reaction a 5'-end NAD(+)-phospho-ribonucleoside in mRNA + H2O = a 5'-end phospho-adenosine-phospho-ribonucleoside in mRNA + beta-nicotinamide D-ribonucleotide + 2 H(+). The catalysed reaction is NAD(+) + H2O = beta-nicotinamide D-ribonucleotide + AMP + 2 H(+). It carries out the reaction NADH + H2O = reduced beta-nicotinamide D-ribonucleotide + AMP + 2 H(+). Its function is as follows. mRNA decapping enzyme that specifically removes the nicotinamide adenine dinucleotide (NAD) cap from a subset of mRNAs by hydrolyzing the diphosphate linkage to produce nicotinamide mononucleotide (NMN) and 5' monophosphate mRNA. The NAD-cap is present at the 5'-end of some mRNAs and stabilizes RNA against 5'-processing. Has preference for mRNAs with a 5'-end purine. Catalyzes the hydrolysis of a broad range of dinucleotide pyrophosphates. The polypeptide is NAD-capped RNA hydrolase NudC (Yersinia pestis bv. Antiqua (strain Antiqua)).